The sequence spans 100 residues: Protein Tat (100 aa).

Residues 1–24 form an interaction with human CREBBP region; sequence MDPIDPDLEPWKHPGSQPRTVCNN. The tract at residues 1–48 is transactivation; it reads MDPIDPDLEPWKHPGSQPRTVCNNCYCKACCYHCIYCFTKKGLGISYG. Zn(2+)-binding residues include cysteine 22, cysteine 25, and cysteine 27. The tract at residues 22–37 is cysteine-rich; that stretch reads CNNCYCKACCYHCIYC. Lysine 28 carries the post-translational modification N6-acetyllysine; by host PCAF. 4 residues coordinate Zn(2+): cysteine 30, histidine 33, cysteine 34, and cysteine 37. Residues 38-48 are core; sequence FTKKGLGISYG. Positions 48 to 58 are enriched in basic residues; the sequence is GRKKRTTRRRT. Positions 48 to 100 are disordered; the sequence is GRKKRTTRRRTAPAGSKNNQDSIPKQPLSQSRGNKEGSEKSTKEVASKTEADQ. Residues 49 to 57 carry the Nuclear localization signal, RNA-binding (TAR), and protein transduction motif; it reads RKKRTTRRR. The segment at 49 to 87 is interaction with the host capping enzyme RNGTT; the sequence is RKKRTTRRRTAPAGSKNNQDSIPKQPLSQSRGNKEGSEK. An N6-acetyllysine; by host EP300 and GCN5L2 mark is found at lysine 50 and lysine 51. Arginine 52 carries the post-translational modification Asymmetric dimethylarginine; by host PRMT6. Polar residues predominate over residues 63 to 79; the sequence is SKNNQDSIPKQPLSQSR. Residue lysine 72 forms a Glycyl lysine isopeptide (Lys-Gly) (interchain with G-Cter in ubiquitin) linkage. A compositionally biased stretch (basic and acidic residues) spans 80–100; it reads GNKEGSEKSTKEVASKTEADQ.

The protein belongs to the lentiviruses Tat family. Interacts with host CCNT1. Associates with the P-TEFb complex composed at least of Tat, P-TEFb (CDK9 and CCNT1), TAR RNA, RNA Pol II. Recruits the HATs CREBBP, TAF1/TFIID, EP300, PCAF and GCN5L2. Interacts with host KAT5/Tip60; this interaction targets the latter to degradation. Interacts with the host deacetylase SIRT1. Interacts with host capping enzyme RNGTT; this interaction stimulates RNGTT. Binds to host KDR, and to the host integrins ITGAV/ITGB3 and ITGA5/ITGB1. Interacts with host KPNB1/importin beta-1 without previous binding to KPNA1/importin alpha-1. Interacts with EIF2AK2. Interacts with host nucleosome assembly protein NAP1L1; this interaction may be required for the transport of Tat within the nucleus, since the two proteins interact at the nuclear rim. Interacts with host C1QBP/SF2P32; this interaction involves lysine-acetylated Tat. Interacts with the host chemokine receptors CCR2, CCR3 and CXCR4. Interacts with host DPP4/CD26; this interaction may trigger an anti-proliferative effect. Interacts with host LDLR. Interacts with the host extracellular matrix metalloproteinase MMP1. Interacts with host PRMT6; this interaction mediates Tat's methylation. Interacts with, and is ubiquitinated by MDM2/Hdm2. Interacts with host PSMC3 and HTATIP2. Interacts with STAB1; this interaction may overcome SATB1-mediated repression of IL2 and IL2RA (interleukin) in T cells by binding to the same domain than HDAC1. Interacts (when acetylated) with human CDK13, thereby increasing HIV-1 mRNA splicing and promoting the production of the doubly spliced HIV-1 protein Nef. Interacts with host TBP; this interaction modulates the activity of transcriptional pre-initiation complex. Interacts with host RELA. Post-translationally, asymmetrical arginine methylation by host PRMT6 seems to diminish the transactivation capacity of Tat and affects the interaction with host CCNT1. Acetylation by EP300, CREBBP, GCN5L2/GCN5 and PCAF regulates the transactivation activity of Tat. EP300-mediated acetylation of Lys-50 promotes dissociation of Tat from the TAR RNA through the competitive binding to PCAF's bromodomain. In addition, the non-acetylated Tat's N-terminus can also interact with PCAF. PCAF-mediated acetylation of Lys-28 enhances Tat's binding to CCNT1. Lys-50 is deacetylated by SIRT1. In terms of processing, polyubiquitination by host MDM2 does not target Tat to degradation, but activates its transactivation function and fosters interaction with CCNT1 and TAR RNA. Post-translationally, phosphorylated by EIF2AK2 on serine and threonine residues adjacent to the basic region important for TAR RNA binding and function. Phosphorylation of Tat by EIF2AK2 is dependent on the prior activation of EIF2AK2 by dsRNA.

The protein resides in the host nucleus. It is found in the host nucleolus. It localises to the host cytoplasm. Its subcellular location is the secreted. Transcriptional activator that increases RNA Pol II processivity, thereby increasing the level of full-length viral transcripts. Recognizes a hairpin structure at the 5'-LTR of the nascent viral mRNAs referred to as the transactivation responsive RNA element (TAR) and recruits the cyclin T1-CDK9 complex (P-TEFb complex) that will in turn hyperphosphorylate the RNA polymerase II to allow efficient elongation. The CDK9 component of P-TEFb and other Tat-activated kinases hyperphosphorylate the C-terminus of RNA Pol II that becomes stabilized and much more processive. Other factors such as HTATSF1/Tat-SF1, SUPT5H/SPT5, and HTATIP2 are also important for Tat's function. Besides its effect on RNA Pol II processivity, Tat induces chromatin remodeling of proviral genes by recruiting the histone acetyltransferases (HATs) CREBBP, EP300 and PCAF to the chromatin. This also contributes to the increase in proviral transcription rate, especially when the provirus integrates in transcriptionally silent region of the host genome. To ensure maximal activation of the LTR, Tat mediates nuclear translocation of NF-kappa-B by interacting with host RELA. Through its interaction with host TBP, Tat may also modulate transcription initiation. Tat can reactivate a latently infected cell by penetrating in it and transactivating its LTR promoter. In the cytoplasm, Tat is thought to act as a translational activator of HIV-1 mRNAs. Its function is as follows. Extracellular circulating Tat can be endocytosed by surrounding uninfected cells via the binding to several surface receptors such as CD26, CXCR4, heparan sulfate proteoglycans (HSPG) or LDLR. Neurons are rarely infected, but they internalize Tat via their LDLR. Through its interaction with nuclear HATs, Tat is potentially able to control the acetylation-dependent cellular gene expression. Modulates the expression of many cellular genes involved in cell survival, proliferation or in coding for cytokines or cytokine receptors. Tat plays a role in T-cell and neurons apoptosis. Tat induced neurotoxicity and apoptosis probably contribute to neuroAIDS. Circulating Tat also acts as a chemokine-like and/or growth factor-like molecule that binds to specific receptors on the surface of the cells, affecting many cellular pathways. In the vascular system, Tat binds to ITGAV/ITGB3 and ITGA5/ITGB1 integrins dimers at the surface of endothelial cells and competes with bFGF for heparin-binding sites, leading to an excess of soluble bFGF. The chain is Protein Tat from Pan (chimpanzees).